A 125-amino-acid polypeptide reads, in one-letter code: MSKEEILQAIKNMTVLELAELVKALEEEFGVSAAAPVAVAAAPAAGAPAAAPAEEKTEFDVILQEVGSDKIKVIKVVREITGLGLKEAKDLVDSVPKPIKEGVSKEEANQIKAKFEEVGAKVEIK.

It belongs to the bacterial ribosomal protein bL12 family. Homodimer. Part of the ribosomal stalk of the 50S ribosomal subunit. Forms a multimeric L10(L12)X complex, where L10 forms an elongated spine to which 2 to 4 L12 dimers bind in a sequential fashion. Binds GTP-bound translation factors.

Forms part of the ribosomal stalk which helps the ribosome interact with GTP-bound translation factors. Is thus essential for accurate translation. The polypeptide is Large ribosomal subunit protein bL12 (Caldanaerobacter subterraneus subsp. tengcongensis (strain DSM 15242 / JCM 11007 / NBRC 100824 / MB4) (Thermoanaerobacter tengcongensis)).